Reading from the N-terminus, the 673-residue chain is Polyunsaturated fatty acid 5-lipoxygenase (673 aa).

Residues 2–117 (PSYTVTVATG…EIVLRDGRAK (116 aa)) enclose the PLAT domain. Positions 17, 18, 19, 44, 45, 47, 79, and 80 each coordinate Ca(2+). Residues 118–673 (LARDDQIHIL…PDRIPNSVAI (556 aa)) form the Lipoxygenase domain. The residue at position 271 (Ser-271) is a Phosphoserine. Residues His-367 and His-372 each coordinate Fe cation. The residue at position 523 (Ser-523) is a Phosphoserine. Fe cation is bound by residues His-550, Asn-554, and Ile-673.

It belongs to the lipoxygenase family. In terms of assembly, homodimer. Interacts with ALOX5AP and LTC4S. Interacts with COTL1, the interaction is required for stability and efficient catalytic activity. Interacts with PIK3R1; this interaction bridges ALOX5 with CD40 after CD40 ligation in B cells and leads to the production of reactive oxygen species (ROS). Interacts (via PLAT domain) with DICER1 (via Dicer dsRNA-binding fold domain); this interaction enhances arachidonate 5-lipoxygenase activity and modifies the miRNA precursor processing activity of DICER1. It depends on Fe cation as a cofactor. Post-translationally, serine phosphorylation by MAPKAPK2 is stimulated by arachidonic acid. Phosphorylation on Ser-523 by PKA has an inhibitory effect. Phosphorylation on Ser-271 prevents export from the nucleus. Phosphorylation at Ser-523 is stimulated by 8-bromo-3',5'-cyclic AMP or prostaglandin E2.

It localises to the cytoplasm. Its subcellular location is the nucleus matrix. The protein localises to the nucleus membrane. It is found in the perinuclear region. The protein resides in the cytosol. It localises to the nucleus envelope. Its subcellular location is the nucleus intermembrane space. The enzyme catalyses (5Z,8Z,11Z,14Z)-eicosatetraenoate + O2 = leukotriene A4 + H2O. The catalysed reaction is 18-HEPE + O2 = (5S)-hydroperoxy-18-hydroxy-(7E,9E,11Z,14Z,16E)-eicosapentaenoate. It catalyses the reaction (18R)-hydroxy-(5Z,8Z,11Z,14Z,16E)-eicosapentaenoate + O2 = (5S)-hydroperoxy-(18R)-hydroxy-(6E,8Z,11Z,14Z,16E)-eicosapentaenoate. It carries out the reaction (18S)-hydroxy-(5Z,8Z,11Z,14Z,16E)-eicosapentaenoate + O2 = (5S)-hydroperoxy-(18S)-hydroxy-(6E,8Z,11Z,14Z,16E)-eicosapentaenoate. The enzyme catalyses (5S)-hydroperoxy-(18S)-hydroxy-(6E,8Z,11Z,14Z,16E)-eicosapentaenoate = (5S,6S)-epoxy-(18S)-hydroxy-(7E,9E,11Z,14Z,16E)-eicosapentaenoate + H2O. The catalysed reaction is (5S)-hydroperoxy-(18R)-hydroxy-(6E,8Z,11Z,14Z,16E)-eicosapentaenoate = (5S,6S)-epoxy-(18R)-hydroxy-(7E,9E,11Z,14Z,16E)-eicosapentaenoate + H2O. It catalyses the reaction (5S)-hydroperoxy-18-hydroxy-(7E,9E,11Z,14Z,16E)-eicosapentaenoate = (5S,6S)-epoxy-18-hydroxy-(7E,9E,11Z,14Z,16E)-eicosapentaenoate + H2O. It carries out the reaction (5Z,8Z,11Z,14Z)-eicosatetraenoate + O2 = (5S)-hydroperoxy-(6E,8Z,11Z,14Z)-eicosatetraenoate. The enzyme catalyses (15S)-hydroxy-(5Z,8Z,11Z,13E)-eicosatetraenoate + O2 = (5S)-hydroperoxy-(15S)-hydroxy-(6E,8Z,11Z,13E)-eicosatetraenoate. The catalysed reaction is (5S)-hydroperoxy-(6E,8Z,11Z,14Z)-eicosatetraenoate = leukotriene A4 + H2O. It catalyses the reaction (5Z,8Z,11Z,14Z)-eicosatetraenoate + O2 = (8S)-hydroperoxy-(5Z,9E,11Z,14Z)-eicosatetraenoate. It carries out the reaction (5Z,8Z,11Z,14Z)-eicosatetraenoate + O2 = (12S)-hydroperoxy-(5Z,8Z,10E,14Z)-eicosatetraenoate. The enzyme catalyses (5Z,8Z)-eicosadienoate + O2 = (5S)-hydroperoxy-(6E,8Z)-eicosadienoate. The catalysed reaction is (12S)-hydroxy-(5Z,8Z,10E,14Z)-eicosatetraenoate + O2 = (5S)-hydroperoxy-(12S)-hydroxy-(6E,8Z,10E,14Z)-eicosatetraenoate. It catalyses the reaction (5Z,8Z,11Z,14Z,17Z)-eicosapentaenoate + O2 = 5-hydroperoxy-(6E,8Z,11Z,14Z,17Z)-eicosapentaenoate. It carries out the reaction (4Z,7Z,10Z,13Z,16Z,19Z)-docosahexaenoate + O2 = (14S)-hydroperoxy-(4Z,7Z,10Z,12E,16Z,19Z)-docosahexaenoate. The enzyme catalyses (4Z,7Z,10Z,13Z,16Z,19Z)-docosahexaenoate + O2 = (7S)-hydroperoxy-(4Z,8E,10Z,13Z,16Z,19Z)-docosahexaenoate. The catalysed reaction is (4Z,7Z,10Z,13Z,16Z,19Z)-docosahexaenoate + O2 = (17S)-hydroperoxy-(4Z,7Z,10Z,13Z,15E,19Z)-docosahexaenoate. It functions in the pathway lipid metabolism; leukotriene A4 biosynthesis. Functionally, catalyzes the oxygenation of arachidonate to 5-hydroperoxyeicosatetraenoate (5-HPETE) followed by the dehydration to 5,6- epoxyeicosatetraenoate (Leukotriene A4/LTA4), the first two steps in the biosynthesis of leukotrienes, which are potent mediators of inflammation. Also catalyzes the oxygenation of arachidonate into 8-hydroperoxyicosatetraenoate (8-HPETE) and 12-hydroperoxyicosatetraenoate (12-HPETE). Displays lipoxin synthase activity being able to convert (15S)-HETE into a conjugate tetraene. Although arachidonate is the preferred substrate, this enzyme can also metabolize oxidized fatty acids derived from arachidonate such as (15S)-HETE, eicosapentaenoate (EPA) such as (18R)- and (18S)-HEPE or docosahexaenoate (DHA) which lead to the formation of specialized pro-resolving mediators (SPM) lipoxin and resolvins E and D respectively, therefore it participates in anti-inflammatory responses. Oxidation of DHA directly inhibits endothelial cell proliferation and sprouting angiogenesis via peroxisome proliferator-activated receptor gamma (PPARgamma). It does not catalyze the oxygenation of linoleic acid and does not convert (5S)-HETE to lipoxin isomers. In addition to inflammatory processes, it participates in dendritic cell migration, wound healing through an antioxidant mechanism based on heme oxygenase-1 (HO-1) regulation expression, monocyte adhesion to the endothelium via ITGAM expression on monocytes. Moreover, it helps establish an adaptive humoral immunity by regulating primary resting B cells and follicular helper T cells and participates in the CD40-induced production of reactive oxygen species (ROS) after CD40 ligation in B cells through interaction with PIK3R1 that bridges ALOX5 with CD40. May also play a role in glucose homeostasis, regulation of insulin secretion and palmitic acid-induced insulin resistance via AMPK. Can regulate bone mineralization and fat cell differentiation increases in induced pluripotent stem cells. The chain is Polyunsaturated fatty acid 5-lipoxygenase from Mesocricetus auratus (Golden hamster).